A 138-amino-acid polypeptide reads, in one-letter code: Small ribosomal subunit protein uS12 (138 aa).

Positions 1-22 (MPTINQLVRQGRKSISTKSDSP) are enriched in polar residues. A disordered region spans residues 1–45 (MPTINQLVRQGRKSISTKSDSPALNFGYNSKKKSLTNNPAPQKRG). Aspartate 102 is subject to 3-methylthioaspartic acid.

This sequence belongs to the universal ribosomal protein uS12 family. In terms of assembly, part of the 30S ribosomal subunit. Contacts proteins S8 and S17. May interact with IF1 in the 30S initiation complex.

In terms of biological role, with S4 and S5 plays an important role in translational accuracy. Interacts with and stabilizes bases of the 16S rRNA that are involved in tRNA selection in the A site and with the mRNA backbone. Located at the interface of the 30S and 50S subunits, it traverses the body of the 30S subunit contacting proteins on the other side and probably holding the rRNA structure together. The combined cluster of proteins S8, S12 and S17 appears to hold together the shoulder and platform of the 30S subunit. This is Small ribosomal subunit protein uS12 from Lacticaseibacillus paracasei (strain ATCC 334 / BCRC 17002 / CCUG 31169 / CIP 107868 / KCTC 3260 / NRRL B-441) (Lactobacillus paracasei).